We begin with the raw amino-acid sequence, 322 residues long: Daunorubicin resistance ATP-binding protein DrrA2 (322 aa).

An ABC transporter domain is found at 6–236; sequence VRAEAMEKRY…VGGDRIEVVV (231 aa). An ATP-binding site is contributed by 38–45; the sequence is GPNGAGKT.

It belongs to the ABC transporter superfamily. Drug exporter-1 (DrugE1) (TC 3.A.1.105) family. In terms of assembly, the complex is probably composed of two ATP-binding proteins (DrrA2) and two transmembrane proteins (DrrB2).

The protein resides in the cell membrane. It catalyses the reaction daunorubicin(in) + ATP + H2O = daunorubicin(out) + ADP + phosphate + H(+). In terms of biological role, part of the ABC transporter complex DrrA2B2 involved in daunorubicin efflux. Responsible for energy coupling to the transport system. Confers self-resistance to daunorubicin, an antibiotic produced by S.coeruleorubidus. This Streptomyces coeruleorubidus protein is Daunorubicin resistance ATP-binding protein DrrA2.